The following is a 285-amino-acid chain: Proteasome subunit beta (285 aa).

A propeptide spans 1–50 (MTAEHPARLPQAFMTPGSSSFVDFLAAHDPSLLPSSRALPAGSAPPAPHG) (removed in mature form; by autocatalysis). Residue Thr51 is the Nucleophile of the active site. A disordered region spans residues 266 to 285 (RTRQARSSRSRHGSLGGDLR).

It belongs to the peptidase T1B family. As to quaternary structure, the 20S proteasome core is composed of 14 alpha and 14 beta subunits that assemble into four stacked heptameric rings, resulting in a barrel-shaped structure. The two inner rings, each composed of seven catalytic beta subunits, are sandwiched by two outer rings, each composed of seven alpha subunits. The catalytic chamber with the active sites is on the inside of the barrel. Has a gated structure, the ends of the cylinder being occluded by the N-termini of the alpha-subunits. Is capped by the proteasome-associated ATPase, ARC.

It is found in the cytoplasm. It carries out the reaction Cleavage of peptide bonds with very broad specificity.. It functions in the pathway protein degradation; proteasomal Pup-dependent pathway. Its activity is regulated as follows. The formation of the proteasomal ATPase ARC-20S proteasome complex, likely via the docking of the C-termini of ARC into the intersubunit pockets in the alpha-rings, may trigger opening of the gate for substrate entry. Interconversion between the open-gate and close-gate conformations leads to a dynamic regulation of the 20S proteasome proteolysis activity. In terms of biological role, component of the proteasome core, a large protease complex with broad specificity involved in protein degradation. The sequence is that of Proteasome subunit beta from Sanguibacter keddieii (strain ATCC 51767 / DSM 10542 / NCFB 3025 / ST-74).